The sequence spans 281 residues: DegV domain-containing protein SCO2569 (281 aa).

In terms of domain architecture, DegV spans 5-280; that stretch reads VAIVTDSTAY…PGLLGVVVSS (276 aa). 2 residues coordinate hexadecanoate: threonine 62 and serine 95.

In terms of biological role, may bind long-chain fatty acids, such as palmitate, and may play a role in lipid transport or fatty acid metabolism. This chain is DegV domain-containing protein SCO2569, found in Streptomyces coelicolor (strain ATCC BAA-471 / A3(2) / M145).